The chain runs to 487 residues: Glutamate--tRNA ligase 2 (487 aa).

The 'HIGH' region signature appears at 24–34 (PSPTGFLHIGG). Residues 258–262 (KLSKR) carry the 'KMSKS' region motif. K261 lines the ATP pocket.

Belongs to the class-I aminoacyl-tRNA synthetase family. Glutamate--tRNA ligase type 1 subfamily. As to quaternary structure, monomer.

It localises to the cytoplasm. The catalysed reaction is tRNA(Glu) + L-glutamate + ATP = L-glutamyl-tRNA(Glu) + AMP + diphosphate. Its function is as follows. Catalyzes the attachment of glutamate to tRNA(Glu) in a two-step reaction: glutamate is first activated by ATP to form Glu-AMP and then transferred to the acceptor end of tRNA(Glu). This chain is Glutamate--tRNA ligase 2, found in Novosphingobium aromaticivorans (strain ATCC 700278 / DSM 12444 / CCUG 56034 / CIP 105152 / NBRC 16084 / F199).